A 1040-amino-acid chain; its full sequence is DNA cross-link repair 1A protein (1040 aa).

The segment at 1–190 (MLEDISEEDI…RAGDHPFSSP (190 aa)) is nuclear localization region. A disordered region spans residues 15-76 (SKRKPKRVDP…LGNAGCQTSV (62 aa)). Residues 53 to 65 (RAAEAKEVKDHEV) are compositionally biased toward basic and acidic residues. The UBZ4-type zinc finger occupies 119–149 (DGYCPNCQMPFSSLIGQTPRWHVFECLDSPP). Positions 122, 125, 140, and 144 each coordinate Zn(2+). Residues Lys202, Lys236, Lys269, Lys353, Lys361, Lys429, Lys488, Lys508, Lys517, Lys533, and Lys536 each participate in a glycyl lysine isopeptide (Lys-Gly) (interchain with G-Cter in SUMO2) cross-link. Residues 396-614 (LPYDLACTGG…KSLSDLEFDA (219 aa)) are nuclear focus formation. Disordered stretches follow at residues 582 to 602 (GINL…CKRK) and 623 to 651 (SVEL…ACQK). A Phosphoserine modification is found at Ser590. Glycyl lysine isopeptide (Lys-Gly) (interchain with G-Cter in SUMO2) cross-links involve residues Lys668, Lys670, and Lys674.

Belongs to the DNA repair metallo-beta-lactamase (DRMBL) family. Binds constitutively to TP53BP1. Binds CDC27, which is itself a component of the anaphase promoting complex (APC). Binds PIAS1. As to expression, expressed in brain, heart, kidney, liver, pancreas, placenta and skeletal muscle.

Its subcellular location is the nucleus. It carries out the reaction a beta-lactam + H2O = a substituted beta-amino acid. With respect to regulation, beta-lactamase activity is inhibited by sulbactam. Functionally, may be required for DNA interstrand cross-link repair. Also required for checkpoint mediated cell cycle arrest in early prophase in response to mitotic spindle poisons. Possesses beta-lactamase activity, catalyzing the hydrolysis of penicillin G and nitrocefin. Exhibits no activity towards other beta-lactam antibiotic classes including cephalosporins (cefotaxime) and carbapenems (imipenem). This is DNA cross-link repair 1A protein (DCLRE1A) from Homo sapiens (Human).